Reading from the N-terminus, the 434-residue chain is ATP phosphoribosyltransferase regulatory subunit (434 aa).

Belongs to the class-II aminoacyl-tRNA synthetase family. HisZ subfamily. In terms of assembly, heteromultimer composed of HisG and HisZ subunits.

Its subcellular location is the cytoplasm. Its pathway is amino-acid biosynthesis; L-histidine biosynthesis; L-histidine from 5-phospho-alpha-D-ribose 1-diphosphate: step 1/9. In terms of biological role, required for the first step of histidine biosynthesis. May allow the feedback regulation of ATP phosphoribosyltransferase activity by histidine. This is ATP phosphoribosyltransferase regulatory subunit from Geobacter metallireducens (strain ATCC 53774 / DSM 7210 / GS-15).